The sequence spans 351 residues: MTQSVPLLLRAARGENVDRPPVWMMRQAGRYMKVYRDLRDKYPSFRERSENPDLSYEISMQPFRAFKPDGVILFSDILTPLPGMGIDFDIVESKGPLIKDPIRNESQIKTLRALSPSESCPFVGEVLKRLRDSVGNEAAVLGFVGAPWTLAAYVVEGKSSKNYAVIKAMAFQEPELLHKLLDHFADSIANYLCYQIDSGAQVVQMFDSWAGQLSPIDYETFAAPYQKKVIDLVKKTHPETPMILYISGSAGVLERMGRTGVDIVSLDWTVDMAEGCARLPQNVGIQGNVDPGLLFGSPESIRARIIDTVKKAKGRKFILNLGHGILPGTPEENARVFFEAGKSVNELISQT.

Substrate-binding positions include 26-30 (RQAGR), Asp76, Tyr153, Ser208, and His323.

Belongs to the uroporphyrinogen decarboxylase family. As to quaternary structure, homodimer.

It localises to the cytoplasm. It catalyses the reaction uroporphyrinogen III + 4 H(+) = coproporphyrinogen III + 4 CO2. It functions in the pathway porphyrin-containing compound metabolism; protoporphyrin-IX biosynthesis; coproporphyrinogen-III from 5-aminolevulinate: step 4/4. Catalyzes the decarboxylation of four acetate groups of uroporphyrinogen-III to yield coproporphyrinogen-III. The protein is Uroporphyrinogen decarboxylase of Prochlorococcus marinus (strain MIT 9211).